The sequence spans 486 residues: Acetyl-coenzyme A carboxylase carboxyl transferase subunit beta, chloroplastic (486 aa).

One can recognise a CoA carboxyltransferase N-terminal domain in the interval 224–486; the sequence is LWVQCENCYG…FQFHGFFPRP (263 aa). Cys228, Cys231, Cys247, and Cys250 together coordinate Zn(2+). The segment at 228-250 adopts a C4-type zinc-finger fold; it reads CENCYGLNYKKFFSSKMNICEQC.

Belongs to the AccD/PCCB family. Acetyl-CoA carboxylase is a heterohexamer composed of biotin carboxyl carrier protein, biotin carboxylase and 2 subunits each of ACCase subunit alpha and ACCase plastid-coded subunit beta (accD). Zn(2+) serves as cofactor.

The protein resides in the plastid. It localises to the chloroplast stroma. It catalyses the reaction N(6)-carboxybiotinyl-L-lysyl-[protein] + acetyl-CoA = N(6)-biotinyl-L-lysyl-[protein] + malonyl-CoA. The protein operates within lipid metabolism; malonyl-CoA biosynthesis; malonyl-CoA from acetyl-CoA: step 1/1. Its function is as follows. Component of the acetyl coenzyme A carboxylase (ACC) complex. Biotin carboxylase (BC) catalyzes the carboxylation of biotin on its carrier protein (BCCP) and then the CO(2) group is transferred by the transcarboxylase to acetyl-CoA to form malonyl-CoA. The protein is Acetyl-coenzyme A carboxylase carboxyl transferase subunit beta, chloroplastic of Nymphaea alba (White water-lily).